The following is a 507-amino-acid chain: ATP synthase subunit alpha, chloroplastic (507 aa).

170–177 (GDRQTGKT) is a binding site for ATP.

The protein belongs to the ATPase alpha/beta chains family. As to quaternary structure, F-type ATPases have 2 components, CF(1) - the catalytic core - and CF(0) - the membrane proton channel. CF(1) has five subunits: alpha(3), beta(3), gamma(1), delta(1), epsilon(1). CF(0) has four main subunits: a, b, b' and c.

It is found in the plastid. Its subcellular location is the chloroplast thylakoid membrane. It catalyses the reaction ATP + H2O + 4 H(+)(in) = ADP + phosphate + 5 H(+)(out). In terms of biological role, produces ATP from ADP in the presence of a proton gradient across the membrane. The alpha chain is a regulatory subunit. This Oryza nivara (Indian wild rice) protein is ATP synthase subunit alpha, chloroplastic.